A 326-amino-acid chain; its full sequence is Macrosialin (326 aa).

Residues 1-20 (MRLPVCLILLGPLIAQGTEE) form the signal peptide. Residues 21–109 (DCPHKKAVTL…ATSPRSSTVG (89 aa)) are mucin-like. The Extracellular portion of the chain corresponds to 21–291 (DCPHKKAVTL…PCFSCNRDQS (271 aa)). Residues 38–58 (PTATESTASPTTSHRPTTTSH) show a composition bias toward low complexity. A disordered region spans residues 38 to 129 (PTATESTASP…SPRSKGALGN (92 aa)). A run of 4 repeats spans residues 44-49 (TASPTT), 50-64 (SHRP…VTVH), 65-72 (TSSGPTTV), and 73-88 (THNP…ATIS). The segment covering 59–69 (GNVTVHTSSGP) has biased composition (polar residues). A glycan (N-linked (GlcNAc...) asparagine) is linked at Asn60. The segment covering 70 to 80 (TTVTHNPATTT) has biased composition (low complexity). The segment covering 81-108 (SHGNATISHATVSPTTNGTATSPRSSTV) has biased composition (polar residues). N-linked (GlcNAc...) asparagine glycans are attached at residues Asn84 and Asn97. The span at 111–120 (HPGPPPPSPS) shows a compositional bias: pro residues. Asn129, Asn134, Asn169, Asn218, Asn233, and Asn251 each carry an N-linked (GlcNAc...) asparagine glycan. Cys139 and Cys177 are joined by a disulfide. An intrachain disulfide couples Cys249 to Cys286. A helical membrane pass occupies residues 292–316 (LLLPLIIGLVLLGLLTLVLIAFCIT). Topologically, residues 317-326 (RRRQSTYQPL) are cytoplasmic.

It belongs to the LAMP family. In terms of processing, N- and O-glycosylated. In terms of tissue distribution, expressed in tissue macrophages and to a lesser extent in dendritic cells.

The protein localises to the endosome membrane. It is found in the lysosome membrane. It localises to the cell membrane. Its function is as follows. Could play a role in phagocytic activities of tissue macrophages, both in intracellular lysosomal metabolism and extracellular cell-cell and cell-pathogen interactions. Binds to tissue- and organ-specific lectins or selectins, allowing homing of macrophage subsets to particular sites. Rapid recirculation of CD68 from endosomes and lysosomes to the plasma membrane may allow macrophages to crawl over selectin-bearing substrates or other cells. This Mus musculus (Mouse) protein is Macrosialin (Cd68).